An 831-amino-acid polypeptide reads, in one-letter code: Periplasmic nitrate reductase (831 aa).

A signal peptide (tat-type signal) is located at residues 1-29 (MKFTRREFMKAQAAASAAAVAGIALPATA). Residues 41-97 (IKWEKAPCRFCGTGCSVLVGTQHGRVVATQGDPESPVNKGLNCVKGYFLSKIMYGKD) form the 4Fe-4S Mo/W bis-MGD-type domain. [4Fe-4S] cluster contacts are provided by Cys48, Cys51, Cys55, and Cys83. Mo-bis(molybdopterin guanine dinucleotide) contacts are provided by residues Lys85, Gln152, Asn177, Cys181, 214-221 (WGSNMAEM), 245-249 (STYTH), 264-266 (QSD), Met374, Gln378, Asn484, 510-511 (SD), Lys533, Asp560, and 720-729 (TGRVLEHWHS). Trp796 contacts substrate. Mo-bis(molybdopterin guanine dinucleotide) is bound by residues Asn804 and Lys821.

This sequence belongs to the prokaryotic molybdopterin-containing oxidoreductase family. NasA/NapA/NarB subfamily. Component of the periplasmic nitrate reductase NapAB complex composed of NapA and NapB. [4Fe-4S] cluster serves as cofactor. Requires Mo-bis(molybdopterin guanine dinucleotide) as cofactor. Predicted to be exported by the Tat system. The position of the signal peptide cleavage has not been experimentally proven.

The protein localises to the periplasm. The enzyme catalyses 2 Fe(II)-[cytochrome] + nitrate + 2 H(+) = 2 Fe(III)-[cytochrome] + nitrite + H2O. Its function is as follows. Catalytic subunit of the periplasmic nitrate reductase complex NapAB. Receives electrons from NapB and catalyzes the reduction of nitrate to nitrite. The polypeptide is Periplasmic nitrate reductase (Psychromonas ingrahamii (strain DSM 17664 / CCUG 51855 / 37)).